The chain runs to 589 residues: Phenylalanine--tRNA ligase beta subunit (589 aa).

Residues 290-368 form the B5 domain; that stretch reads LNPTCFKADI…IAYGYDNLKH (79 aa). Mg(2+)-binding residues include Asp-346, Asp-352, Glu-355, and Asp-356.

Belongs to the phenylalanyl-tRNA synthetase beta subunit family. Type 2 subfamily. Tetramer of two alpha and two beta subunits. Requires Mg(2+) as cofactor.

It localises to the cytoplasm. The protein localises to the nucleus. It carries out the reaction tRNA(Phe) + L-phenylalanine + ATP = L-phenylalanyl-tRNA(Phe) + AMP + diphosphate + H(+). The chain is Phenylalanine--tRNA ligase beta subunit (frs1) from Schizosaccharomyces pombe (strain 972 / ATCC 24843) (Fission yeast).